We begin with the raw amino-acid sequence, 754 residues long: MTILTHTLGFPRVGLRRELKKAQESYWAGNATREELLAVGRELRARHWQQQKQAGIDLLPVGDFAWYDHVLTTSLLLGNVPARHQNNDGSVDIDTLFRIGRGRAPTGEPAAAAEMTKWFNTNYHYMVPEFSKGQQFRLTWTQLLEEVDEALALGHKIKPVLLGPVTYLWLGKVKGEPFDRLTLLKDILPVYQHVLAELAKRGIEWVQIDEPALVLELPQAWLDAFKLAYDALAGQVKLLLTTYFEGVTPNLNTIIALPVQGLHVDLIHGKDDVSELHQRLPADWLLSAGLINGRNVWRADLPEKYAQINDIVGKRALWVSSSCSLLHSPIDLSVETRLDAEVKSWFAFALQKCGELALLRDALNSGDTAAVTEWSAPIQARRHSTRVHNVGVEKRLAAITAQDSQRENPYEVRAEAQRARFKLPAWPTTTIGSFPQTTEIRGLRLDFKKGNLDANHYRTGIAEHIRQAIIEQERLGLDVLVHGEAERNDMVEYFGEHLDGFVFTQNGWVQSYGSRCVKPPVVIGDISRPAPITVEWAKYAQSLTDKPVKGMLTGPVTILCWSFPREDVTRETIAKQIALALRDEVADLEAAGIGIIQIDEPALREGLPLRRSDWDAYLAWGVEAFRINAAAAKDETQIHTHMCYCEFNDIMDSIAALDADVITIETSRSDMELLESFEAFDYPNEIGPGVYDIHSPNVPSVEWIEALLKKAAQRIPAQRLWVNPDCGLKTRGWPETRAALANMVKAAHNLRQAE.

5-methyltetrahydropteroyltri-L-glutamate-binding positions include 17–20 (RELK) and K117. L-homocysteine-binding positions include 431–433 (IGS) and E484. L-methionine-binding positions include 431-433 (IGS) and E484. Residues 515–516 (RC) and W561 contribute to the 5-methyltetrahydropteroyltri-L-glutamate site. D599 lines the L-homocysteine pocket. An L-methionine-binding site is contributed by D599. Residue E605 participates in 5-methyltetrahydropteroyltri-L-glutamate binding. Residues H641, C643, and E665 each coordinate Zn(2+). Residue H694 is the Proton donor of the active site. C726 lines the Zn(2+) pocket.

The protein belongs to the vitamin-B12 independent methionine synthase family. It depends on Zn(2+) as a cofactor.

The catalysed reaction is 5-methyltetrahydropteroyltri-L-glutamate + L-homocysteine = tetrahydropteroyltri-L-glutamate + L-methionine. Its pathway is amino-acid biosynthesis; L-methionine biosynthesis via de novo pathway; L-methionine from L-homocysteine (MetE route): step 1/1. Its function is as follows. Catalyzes the transfer of a methyl group from 5-methyltetrahydrofolate to homocysteine resulting in methionine formation. This Salmonella arizonae (strain ATCC BAA-731 / CDC346-86 / RSK2980) protein is 5-methyltetrahydropteroyltriglutamate--homocysteine methyltransferase.